Reading from the N-terminus, the 274-residue chain is Factor H binding protein (274 aa).

The first 19 residues, 1–19 (MNRTAFCCLSLTTALILTA), serve as a signal peptide directing secretion. Residue C20 is the site of N-palmitoyl cysteine attachment. Residue C20 is the site of S-diacylglycerol cysteine attachment. Residues 27–119 (VAADIGAGLA…LESGEFQVYK (93 aa)) form a domain A region. The domain B stretch occupies residues 120–183 (QSHSALTAFQ…TAFGSDDAGG (64 aa)). The tract at residues 184 to 274 (KLTYTIDFAA…IRHIGLAAKQ (91 aa)) is domain C.

Belongs to the factor H binding-protein family. In terms of assembly, binds to host factor H (fH from human). Both fHbp beta-barrels contact Sushi domains 6 and 7 in fH (also called complement control protein domains, CCP). This interaction probably mimics the normal (carbohydrate-dependent) mode of fH recruitement, regulating fH activity. Sucrose octasulphate inhibits the fHbp-fH interaction. In terms of processing, protein is lipidated in N.meningitidis upon growth in radioactive palmitic acid, probably on Cys-20.

Its subcellular location is the cell outer membrane. It is found in the secreted. It localises to the extracellular vesicle. The protein localises to the bacterial extracellular vesicle. Its function is as follows. A bacterial surface lipoprotein that binds host (human) complement factor H (fH, gene CFH), binding contributes to the avoidance of complement-mediated lysis by N.meningitidis. Binding of fH to the bacteria surface is independent of bacterial sialic acid moieties. fH binding affinity is high enough that it may sequester plasma fH, depleting its circulating levels and de-regulating complement in the host. This protein induces high levels of bactericidal antibodies in mice. This Neisseria meningitidis serogroup B (strain ATCC BAA-335 / MC58) protein is Factor H binding protein (fhbP).